We begin with the raw amino-acid sequence, 170 residues long: ATP synthase subunit b (170 aa).

The helical transmembrane segment at 22–41 threads the bilayer; that stretch reads ILNWAVVVFGLYKFLPGFLG. The interval 72–98 is disordered; it reads AKKDLSSAEEKASQIKADSLKRSESIR.

The protein belongs to the ATPase B chain family. In terms of assembly, F-type ATPases have 2 components, F(1) - the catalytic core - and F(0) - the membrane proton channel. F(1) has five subunits: alpha(3), beta(3), gamma(1), delta(1), epsilon(1). F(0) has four main subunits: a(1), b(1), b'(1) and c(10-14). The alpha and beta chains form an alternating ring which encloses part of the gamma chain. F(1) is attached to F(0) by a central stalk formed by the gamma and epsilon chains, while a peripheral stalk is formed by the delta, b and b' chains.

The protein resides in the cellular thylakoid membrane. F(1)F(0) ATP synthase produces ATP from ADP in the presence of a proton or sodium gradient. F-type ATPases consist of two structural domains, F(1) containing the extramembraneous catalytic core and F(0) containing the membrane proton channel, linked together by a central stalk and a peripheral stalk. During catalysis, ATP synthesis in the catalytic domain of F(1) is coupled via a rotary mechanism of the central stalk subunits to proton translocation. Functionally, component of the F(0) channel, it forms part of the peripheral stalk, linking F(1) to F(0). The chain is ATP synthase subunit b from Prochlorococcus marinus (strain MIT 9301).